Here is a 261-residue protein sequence, read N- to C-terminus: MNDEICLTGGGRTTVTRRGGVVYREGGPWSSTVISLLRHLEASGFAEAPSVVGTGFDERGRETLSFIEGEFVHPGPWSEEAFPQFGMMLRRLHDATASFKPPENSMWRDWFGRNLGEGQHVIGHCDTGPWNIVCRSGLPVGLIDWEVAGPVRADIELAQACWLNAQLYDDDIAERVGLGSVTMRAHQVRLLLDGYGLSRKQRGGFVDKLITFAVHDAAEQAKEAAVTPESNDAEPLWAIAWRTRSASWMLHHRQTLEAALA.

Its function is as follows. Required for TFX resistance. This Rhizobium leguminosarum bv. trifolii protein is Trifolitoxin immunity protein (tfxG).